Reading from the N-terminus, the 296-residue chain is Probable AP endonuclease (296 aa).

Residues Cys16 and Cys20 are joined by a disulfide bond. The Zn(2+) site is built by His78, His115, Glu142, His182, His218, Asp231, His233, and Glu271.

It belongs to the AP endonuclease 2 family. Zn(2+) serves as cofactor.

Its subcellular location is the host nucleus. The protein resides in the host cytoplasm. It is found in the virion. In terms of biological role, endonuclease that plays a role in DNA repair. Cleaves phosphodiester bonds on the 5' side of apurinic or apyrimidinic sites (AP sites). In addition to endonuclease activity, the ASFV enzyme has a proofreading 3'-5' exonuclease activity that is considerably more efficient in the elimination of a mismatch than in that of a correctly paired base. Displays 3'-phosphatase and 3'-repair diesterase activities. The single nucleotide gaps generated by the AP endonuclease are filled by the viral AP endonuclease and DNA ligase. The chain is Probable AP endonuclease from Ornithodoros (relapsing fever ticks).